Reading from the N-terminus, the 654-residue chain is Potassium voltage-gated channel subfamily A member 4 (654 aa).

At 1–305 the chain is on the cytoplasmic side; that stretch reads MEVAMVSAES…LLFEYPESSS (305 aa). The tract at residues 24-145 is disordered; sequence QARARERERL…EEGRFYYSEE (122 aa). The span at 36 to 50 shows a compositional bias: low complexity; the sequence is SRAAAAAAVAAATAA. The span at 81–99 shows a compositional bias: basic residues; that stretch reads GSRRRRRQRTEKKKLHHRQ. Residue Ser-122 is modified to Phosphoserine. The span at 122-137 shows a compositional bias: acidic residues; that stretch reads SEEEEDEEEEEEEEEE. The helical transmembrane segment at 306–327 threads the bilayer; sequence PARGIAIVSVLVILISIVIFCL. At 328–371 the chain is on the extracellular side; the sequence is ETLPEFRDDRDLIMALSAGGHSRLLNDTSAPHLENSGHTIFNDP. N-linked (GlcNAc...) asparagine glycosylation is present at Asn-353. A helical transmembrane segment spans residues 372-393; sequence FFIVETVCIVWFSFEFVVRCFA. At 394–404 the chain is on the cytoplasmic side; that stretch reads CPSQALFFKNI. A helical transmembrane segment spans residues 405–425; it reads MNIIDIVSILPYFITLGTDLA. Topologically, residues 426–440 are extracellular; the sequence is QQQGGGNGQQQQAMS. The chain crosses the membrane as a helical; Voltage-sensor span at residues 441 to 461; that stretch reads FAILRIIRLVRVFRIFKLSRH. The Cytoplasmic portion of the chain corresponds to 462 to 476; it reads SKGLQILGHTLRASM. Residues 463-476 form an S4-S5 linker region; the sequence is KGLQILGHTLRASM. The helical transmembrane segment at 477 to 498 threads the bilayer; sequence RELGLLIFFLFIGVILFSSAVY. Topologically, residues 499–512 are extracellular; the sequence is FAEADEPTTHFQSI. The helical intramembrane region spans 513–524; that stretch reads PDAFWWAVVTMT. The short motif at 525–530 is the Selectivity filter element; the sequence is TVGYGD. Residues 525–532 lie within the membrane without spanning it; it reads TVGYGDMK. Topologically, residues 533 to 539 are extracellular; the sequence is PITVGGK. The helical transmembrane segment at 540–568 threads the bilayer; sequence IVGSLCAIAGVLTIALPVPVIVSNFNYFY. The Cytoplasmic segment spans residues 569–654; that stretch reads HRETENEEQT…SNAKAVETDV (86 aa). A Phosphoserine; by PKA modification is found at Ser-600. Basic and acidic residues predominate over residues 630–641; sequence CQGKGDESETDK. The disordered stretch occupies residues 630–654; sequence CQGKGDESETDKNNCSNAKAVETDV. The PDZ-binding signature appears at 652–654; sequence TDV.

The protein belongs to the potassium channel family. A (Shaker) (TC 1.A.1.2) subfamily. Kv1.4/KCNA4 sub-subfamily. Homotetramer and heterotetramer of potassium channel proteins. Interacts with KCNAB1 and KCNAB2. Interacts with DLG1, DLG2 and DLG4 via their PDZ domains. Interacts with SIGMAR1. Detected in a complex with KCNA1. Interacts with KCNA2. Part of a complex containing KCNA1, KCNAB1 and LGI1. Interacts (via cytoplasmic N-terminal domain) with KCNRG. As to expression, expressed in the brain, lens and retina.

The protein resides in the cell membrane. Its subcellular location is the cell projection. It is found in the axon. It carries out the reaction K(+)(in) = K(+)(out). Its function is as follows. Voltage-gated potassium channel that mediates transmembrane potassium transport in excitable membranes. Forms tetrameric potassium-selective channels through which potassium ions pass in accordance with their electrochemical gradient. The channel alternates between opened and closed conformations in response to the voltage difference across the membrane. Can form functional homotetrameric channels and heterotetrameric channels that contain variable proportions of KCNA1, KCNA2, KCNA4, KCNA5, and possibly other family members as well; channel properties depend on the type of alpha subunits that are part of the channel. Channel properties are modulated by cytoplasmic beta subunits that regulate the subcellular location of the alpha subunits and promote rapid inactivation. In vivo, membranes probably contain a mixture of heteromeric potassium channel complexes, making it difficult to assign currents observed in intact tissues to any particular potassium channel family member. Homotetrameric KCNA4 forms a potassium channel that opens in response to membrane depolarization, followed by rapid spontaneous channel closure. Likewise, a heterotetrameric channel formed by KCNA1 and KCNA4 shows rapid inactivation. The sequence is that of Potassium voltage-gated channel subfamily A member 4 (Kcna4) from Mus musculus (Mouse).